The following is a 353-amino-acid chain: Paraneoplastic antigen Ma1 homolog (353 aa).

Belongs to the PNMA family. In terms of tissue distribution, testis and brain specific.

The protein localises to the nucleus. It localises to the nucleolus. The sequence is that of Paraneoplastic antigen Ma1 homolog (Pnma1) from Rattus norvegicus (Rat).